The chain runs to 124 residues: Small ribosomal subunit protein uS12 (124 aa).

Aspartate 89 carries the 3-methylthioaspartic acid modification.

Belongs to the universal ribosomal protein uS12 family. In terms of assembly, part of the 30S ribosomal subunit. Contacts proteins S8 and S17. May interact with IF1 in the 30S initiation complex.

In terms of biological role, with S4 and S5 plays an important role in translational accuracy. Interacts with and stabilizes bases of the 16S rRNA that are involved in tRNA selection in the A site and with the mRNA backbone. Located at the interface of the 30S and 50S subunits, it traverses the body of the 30S subunit contacting proteins on the other side and probably holding the rRNA structure together. The combined cluster of proteins S8, S12 and S17 appears to hold together the shoulder and platform of the 30S subunit. In Erwinia tasmaniensis (strain DSM 17950 / CFBP 7177 / CIP 109463 / NCPPB 4357 / Et1/99), this protein is Small ribosomal subunit protein uS12.